A 230-amino-acid chain; its full sequence is 2,3-bisphosphoglycerate-dependent phosphoglycerate mutase (230 aa).

Residues 8–15 (RHGESEWN), 21–22 (TG), arginine 60, 87–90 (ERHY), lysine 98, 114–115 (RR), and 183–184 (GN) contribute to the substrate site. Histidine 9 serves as the catalytic Tele-phosphohistidine intermediate. The active-site Proton donor/acceptor is glutamate 87.

Belongs to the phosphoglycerate mutase family. BPG-dependent PGAM subfamily.

The catalysed reaction is (2R)-2-phosphoglycerate = (2R)-3-phosphoglycerate. It participates in carbohydrate degradation; glycolysis; pyruvate from D-glyceraldehyde 3-phosphate: step 3/5. Its function is as follows. Catalyzes the interconversion of 2-phosphoglycerate and 3-phosphoglycerate. The polypeptide is 2,3-bisphosphoglycerate-dependent phosphoglycerate mutase (Streptococcus pneumoniae (strain P1031)).